A 71-amino-acid polypeptide reads, in one-letter code: Small ribosomal subunit protein eS17 (71 aa).

Belongs to the eukaryotic ribosomal protein eS17 family.

In Pyrobaculum neutrophilum (strain DSM 2338 / JCM 9278 / NBRC 100436 / V24Sta) (Thermoproteus neutrophilus), this protein is Small ribosomal subunit protein eS17.